The following is a 220-amino-acid chain: Deoxyribose-phosphate aldolase (220 aa).

The active-site Proton donor/acceptor is the D92. K157 serves as the catalytic Schiff-base intermediate with acetaldehyde. The active-site Proton donor/acceptor is the K186.

This sequence belongs to the DeoC/FbaB aldolase family. DeoC type 1 subfamily.

It is found in the cytoplasm. The enzyme catalyses 2-deoxy-D-ribose 5-phosphate = D-glyceraldehyde 3-phosphate + acetaldehyde. The protein operates within carbohydrate degradation; 2-deoxy-D-ribose 1-phosphate degradation; D-glyceraldehyde 3-phosphate and acetaldehyde from 2-deoxy-alpha-D-ribose 1-phosphate: step 2/2. Its function is as follows. Catalyzes a reversible aldol reaction between acetaldehyde and D-glyceraldehyde 3-phosphate to generate 2-deoxy-D-ribose 5-phosphate. This chain is Deoxyribose-phosphate aldolase, found in Caldicellulosiruptor saccharolyticus (strain ATCC 43494 / DSM 8903 / Tp8T 6331).